The sequence spans 204 residues: Protein Nef (204 aa).

A disordered region spans residues 1 to 27 (MGNKWSKSWPQVRDRMRRAAPAPAADG). Glycine 2 carries the N-myristoyl glycine; by host lipid modification. A Phosphoserine; by host modification is found at serine 6. The interval 60–63 (TEEE) is acidic; interacts with host PACS1 and PACS2; stabilizes the interaction of NEF/MHC-I with host AP1M1; necessary for MHC-I internalization. The SH3-binding; interaction with Src family tyrosine kinases stretch occupies residues 67–76 (PVRPQVPLRP). The PxxP; stabilizes the interaction of NEF/MHC-I with host AP1M1; necessary for MHC-I internalization motif lies at 70–73 (PQVP). The mediates dimerization, Nef-PTE1 interaction stretch occupies residues 106-122 (EILDLWVHNTQGYFPDW). The tract at residues 146-178 (VDPSEVEEANEGENNCLLHPACQHGIEDEEREV) is binding to ATP6V1H. Residues 162–163 (LL) carry the Dileucine internalization motif; necessary for CD4 internalization motif. The short motif at 172 to 173 (ED) is the Diacidic; necessary for CD4 internalization element.

The protein belongs to the lentivirus primate group Nef protein family. In terms of assembly, monomer; cytosolic form. Homodimer; membrane bound form. Interacts with Nef associated p21-activated kinase (PAK2); this interaction activates PAK2. Associates with the Nef-MHC-I-AP1 complex; this complex is required for MHC-I internalization. Interacts (via C-terminus) with host PI3-kinase. Interacts with host PACS1; this interaction seems to be weak. Interacts with host PACS2. Interacts with host LCK and MAPK3; these interactions inhibit the kinase activity of the latter. Interacts with host ATP6V1H; this interaction may play a role in CD4 endocytosis. Associates with the CD4-Nef-AP2 complex; this complex is required for CD4 internalization. Interacts with host AP2 subunit alpha and AP2 subunit sigma2. Interacts with TCR-zeta chain; this interaction up-regulates the Fas ligand (FasL) surface expression. Interacts with host HCK, LYN, and SRC; these interactions activate the Src family kinases. Interacts with MAP3K5; this interaction inhibits the Fas and TNFR-mediated death signals. Interacts with beta-COP and PTE1. Interacts with human RACK1; this increases Nef phosphorylation by PKC. Interacts with TP53; this interaction decreases the half-life of TP53, protecting the infected cell against p53-mediated apoptosis. The virion-associated Nef proteins are cleaved by the viral protease to release the soluble C-terminal core protein. Nef is probably cleaved concomitantly with viral structural proteins on maturation of virus particles. Post-translationally, myristoylated. In terms of processing, phosphorylated on serine residues, probably by host PKCdelta and theta.

It is found in the host cell membrane. The protein resides in the virion. It localises to the secreted. The protein localises to the host Golgi apparatus membrane. Its function is as follows. Factor of infectivity and pathogenicity, required for optimal virus replication. Alters numerous pathways of T-lymphocyte function and down-regulates immunity surface molecules in order to evade host defense and increase viral infectivity. Alters the functionality of other immunity cells, like dendritic cells, monocytes/macrophages and NK cells. In terms of biological role, in infected CD4(+) T-lymphocytes, down-regulates the surface MHC-I, mature MHC-II, CD4, CD28, CCR5 and CXCR4 molecules. Mediates internalization and degradation of host CD4 through the interaction of with the cytoplasmic tail of CD4, the recruitment of AP-2 (clathrin adapter protein complex 2), internalization through clathrin coated pits, and subsequent transport to endosomes and lysosomes for degradation. Diverts host MHC-I molecules to the trans-Golgi network-associated endosomal compartments by an endocytic pathway to finally target them for degradation. MHC-I down-regulation may involve AP-1 (clathrin adapter protein complex 1) or possibly Src family kinase-ZAP70/Syk-PI3K cascade recruited by PACS2. In consequence infected cells are masked for immune recognition by cytotoxic T-lymphocytes. Decreasing the number of immune receptors also prevents reinfection by more HIV particles (superinfection). Down-regulates host SERINC3 and SERINC5 thereby excluding these proteins from the viral particles. Virion infectivity is drastically higher when SERINC3 or SERINC5 are excluded from the viral envelope, because these host antiviral proteins impair the membrane fusion event necessary for subsequent virion penetration. Functionally, bypasses host T-cell signaling by inducing a transcriptional program nearly identical to that of anti-CD3 cell activation. Interaction with TCR-zeta chain up-regulates the Fas ligand (FasL). Increasing surface FasL molecules and decreasing surface MHC-I molecules on infected CD4(+) cells send attacking cytotoxic CD8+ T-lymphocytes into apoptosis. Plays a role in optimizing the host cell environment for viral replication without causing cell death by apoptosis. Protects the infected cells from apoptosis in order to keep them alive until the next virus generation is ready to strike. Inhibits the Fas and TNFR-mediated death signals by blocking MAP3K5/ASK1. Decreases the half-life of TP53, protecting the infected cell against p53-mediated apoptosis. Inhibits the apoptotic signals regulated by the Bcl-2 family proteins through the formation of a Nef/PI3-kinase/PAK2 complex that leads to activation of PAK2 and induces phosphorylation of host BAD. Its function is as follows. Extracellular Nef protein targets CD4(+) T-lymphocytes for apoptosis by interacting with CXCR4 surface receptors. The sequence is that of Protein Nef from Homo sapiens (Human).